The chain runs to 1599 residues: MFEAKVKKQIKSIQFGLFSPDEVRNGSVALIVHPEVMEGGVPKTGGLIDLRMGTTDRMYLCQSCGGDNFSCPGHFGHIELTKPMFHVGYISKIKKVLECVCFYCSKIKIPRKGIKSTLSNVWGMSKGRSVCEGEVLDNGRSGCGNKQPVIKREGLTLVAFMKGEESNEGKVMLNGERVYSIFKKISDEDSVYMGFDLKYSRPEWMILTVLLVPPPAVRPSIVMEGSLRGEDDLTHKLADIIKSNGYLKKYEQEGAPGHIVRDYEQLLQFHVATFIDNDIGGLPQALQKSGRPLKSLSARLKGKEGRIRGNLMGKRVDFSARTVITPDPNISLEEVGVPLEIAKIHTFPEKVTSFNIDRLEKLVRAGPNEHPGANYVLRSDGQKIDLNFNRSDIRLEEGYVVERHMQSGDVVLFNRQPSLHKMSMMAHYARVMGNKTFRLNLSVTSPYNADFDGDEMNLHMPQSYTSKAELEELALVSRQIISPQSNKPVMGIVQDTLTGLRLFTLRDTFLNEREVMSLLYAVNLEFCDIPLGDAVQTGLRKGKDYDIMKILRKPAIAKPMRLWTGKQVLSFVLPNLNYIGLSSEHDDDDKENIGDTRVIIQDGYIHSGVIDKKAAGATQGGLVHIIFNDFGPKRAAQFFDGVQRMINAFMTGIHTFSMGIGDTIADPKTVKVVESAIRKAKEEVSALIENARQNRLERLPGMTMKESFESHLNLVLNRARDVSGTSAQRSLSENNNMKTMVLAGSKGSFINISQVTACVGQQNVEGKRIPFGFSHRTLPHFVKDDYTGKSRGFVENSYLTGLDPEEFFFHAMGGREGLIDTAIKTAETGYIQRRLVKALEDAIVRQDESVRSGNGLVYQIKYGEDGFDATFLESQKVDVKNFTKRYYIDMFGTEELEIKHGQVSEEVYGMLSSDVDLQKLLDQEYEWLVGEIFEGPPILSVGEVDIERDYKVRDIYQSAVMSPCNFTRILATAKRTFHLSTGDVSPYYILEAHKHLTTSNRILNVLIRTNLSVKRVLLEHRLNTEAFNWVVEVIDAKILKAKITPNEMVGTLAAQSVGEPATQMTLNTFHLAGVASTVTMGVPRLKEIFNVTKNLKTPSMKIYLDREHGKSIEAAKTIQNEIECLTVKDLCLFSEIYYDPEITGTEISDDKDFVEAYFEFPDEDVDFSCLSPFLMRLVVDRAKLVGRGINLEYVAMFIRKELGGGAHVICSDENAVNMVVRVRTTKSEDESLNFYTTALNSLLRLQLGGYKNVKKVYISEDKDRKEWYLQTDGICLSQILGNPAVNSRLTISNDLVEIAETLGIEAARESILRELTIVIDGNGSYVNYRHMSLLADVMTMRGYLCGITRHGVNKVGAGALKRSSFEETVEILLDAALVSEKNICRGITENIMMGQLAPMGTGNIEIMLDMKKLDKAIPLSNPVFKPNEPATPVISTPSSDSFSISSGNWSPTHLEMAYSRDLGERLSPTSPSYSPTSPSYSPTSPSYSPTSPSYSPTSPSYSPTSPSYSPTSPSYSPTSPSYSPTSPSYSPTSPSYSPTSPSYSPTSPSYSPTSPSYSPTSPSYSPTSPSYSVSMSSFSNKNKSKNQDGDKKRRNDGSF.

The Zn(2+) site is built by C61, C64, C71, H74, C101, C104, C131, and C143. D450, D452, and D454 together coordinate Mg(2+). Residues 804–816 (PEEFFFHAMGGRE) form a bridging helix region. Disordered regions lie at residues 1424 to 1446 (FKPNEPATPVISTPSSDSFSISS) and 1464 to 1599 (ERLS…DGSF). 2 stretches are compositionally biased toward low complexity: residues 1435-1446 (STPSSDSFSISS) and 1467-1581 (SPTS…FSNK). 14 consecutive repeat copies span residues 1473-1479 (YSPTSPS), 1480-1486 (YSPTSPS), 1487-1493 (YSPTSPS), 1494-1500 (YSPTSPS), 1501-1507 (YSPTSPS), 1508-1514 (YSPTSPS), 1515-1521 (YSPTSPS), 1522-1528 (YSPTSPS), 1529-1535 (YSPTSPS), 1536-1542 (YSPTSPS), 1543-1549 (YSPTSPS), 1550-1556 (YSPTSPS), 1557-1563 (YSPTSPS), and 1564-1570 (YSPTSPS). The tract at residues 1473–1570 (YSPTSPSYSP…SPSYSPTSPS (98 aa)) is C-terminal domain (CTD); 14 X 7 AA approximate tandem repeats of Y-S-P-[TS]-S-P-S. Over residues 1585 to 1599 (KNQDGDKKRRNDGSF) the composition is skewed to basic and acidic residues.

It belongs to the RNA polymerase beta' chain family. In terms of assembly, component of the RNA polymerase II (Pol II) complex consisting of 12 subunits. Post-translationally, the tandem 7 residues repeats in the C-terminal domain (CTD) can be highly phosphorylated. The phosphorylation activates Pol II. Phosphorylation occurs mainly at residues 'Ser-2' and 'Ser-5' of the heptapeptide repeat. The phosphorylation state is believed to result from the balanced action of site-specific CTD kinases and phosphatase, and a 'CTD code' that specifies the position of Pol II within the transcription cycle has been proposed.

It is found in the nucleus. The catalysed reaction is RNA(n) + a ribonucleoside 5'-triphosphate = RNA(n+1) + diphosphate. In terms of biological role, DNA-dependent RNA polymerase catalyzes the transcription of DNA into RNA using the four ribonucleoside triphosphates as substrates. Largest and catalytic component of RNA polymerase II which synthesizes mRNA precursors and many functional non-coding RNAs. Forms the polymerase active center together with the second largest subunit. Pol II is the central component of the basal RNA polymerase II transcription machinery. It is composed of mobile elements that move relative to each other. RPB1 is part of the core element with the central large cleft, the clamp element that moves to open and close the cleft and the jaws that are thought to grab the incoming DNA template. At the start of transcription, a single-stranded DNA template strand of the promoter is positioned within the central active site cleft of Pol II. A bridging helix emanates from RPB1 and crosses the cleft near the catalytic site and is thought to promote translocation of Pol II by acting as a ratchet that moves the RNA-DNA hybrid through the active site by switching from straight to bent conformations at each step of nucleotide addition. During transcription elongation, Pol II moves on the template as the transcript elongates. Elongation is influenced by the phosphorylation status of the C-terminal domain (CTD) of Pol II largest subunit (RPB1), which serves as a platform for assembly of factors that regulate transcription initiation, elongation, termination and mRNA processing. The sequence is that of DNA-directed RNA polymerase II subunit RPB1 (RPB1) from Encephalitozoon cuniculi (strain GB-M1) (Microsporidian parasite).